We begin with the raw amino-acid sequence, 150 residues long: Large ribosomal subunit protein bL9 (150 aa).

Belongs to the bacterial ribosomal protein bL9 family.

Binds to the 23S rRNA. This chain is Large ribosomal subunit protein bL9, found in Corynebacterium aurimucosum (strain ATCC 700975 / DSM 44827 / CIP 107346 / CN-1) (Corynebacterium nigricans).